We begin with the raw amino-acid sequence, 115 residues long: Peptidyl-tRNA hydrolase (115 aa).

The protein belongs to the PTH2 family.

Its subcellular location is the cytoplasm. It catalyses the reaction an N-acyl-L-alpha-aminoacyl-tRNA + H2O = an N-acyl-L-amino acid + a tRNA + H(+). Its function is as follows. The natural substrate for this enzyme may be peptidyl-tRNAs which drop off the ribosome during protein synthesis. The sequence is that of Peptidyl-tRNA hydrolase (pth) from Nanoarchaeum equitans (strain Kin4-M).